Here is a 486-residue protein sequence, read N- to C-terminus: uncharacterized protein (486 aa).

NAD(+) is bound at residue 24–35; the sequence is IVHLGFGAFHRA.

It belongs to the mannitol dehydrogenase family. UxuB subfamily.

This is an uncharacterized protein from Escherichia coli (strain K12).